A 449-amino-acid chain; its full sequence is Neuraminidase (449 aa).

Topologically, residues M1–K6 are intravirion. The chain crosses the membrane as a helical span at residues I7 to G27. An involved in apical transport and lipid raft association region spans residues G11–W33. The Virion surface segment spans residues N28–K449. The tract at residues H36–S70 is hypervariable stalk region. Residue N68 is glycosylated (N-linked (GlcNAc...) asparagine; by host). Residues L71 to K449 form a head of neuraminidase region. Intrachain disulfides connect C72–C397, C104–C109, C164–C211, C213–C218, C259–C272, C261–C270, C298–C315, and C401–C426. Substrate is bound at residue R98. N-linked (GlcNAc...) asparagine; by host glycosylation occurs at N126. Residue D131 is the Proton donor/acceptor of the active site. Residue R132 participates in substrate binding. N215 carries an N-linked (GlcNAc...) asparagine; by host glycan. Substrate is bound at residue E257 to E258. Substrate is bound at residue R273. Residues D274, G278, and D304 each contribute to the Ca(2+) site. Position 348 (R348) interacts with substrate. Y382 functions as the Nucleophile in the catalytic mechanism.

This sequence belongs to the glycosyl hydrolase 34 family. In terms of assembly, homotetramer. Ca(2+) is required as a cofactor. Post-translationally, N-glycosylated.

The protein resides in the virion membrane. It localises to the host apical cell membrane. The enzyme catalyses Hydrolysis of alpha-(2-&gt;3)-, alpha-(2-&gt;6)-, alpha-(2-&gt;8)- glycosidic linkages of terminal sialic acid residues in oligosaccharides, glycoproteins, glycolipids, colominic acid and synthetic substrates.. With respect to regulation, inhibited by the neuraminidase inhibitors zanamivir (Relenza) and oseltamivir (Tamiflu). These drugs interfere with the release of progeny virus from infected cells and are effective against all influenza strains. Resistance to neuraminidase inhibitors is quite rare. Functionally, catalyzes the removal of terminal sialic acid residues from viral and cellular glycoconjugates. Cleaves off the terminal sialic acids on the glycosylated HA during virus budding to facilitate virus release. Additionally helps virus spread through the circulation by further removing sialic acids from the cell surface. These cleavages prevent self-aggregation and ensure the efficient spread of the progeny virus from cell to cell. Otherwise, infection would be limited to one round of replication. Described as a receptor-destroying enzyme because it cleaves a terminal sialic acid from the cellular receptors. May facilitate viral invasion of the upper airways by cleaving the sialic acid moieties on the mucin of the airway epithelial cells. Likely to plays a role in the budding process through its association with lipid rafts during intracellular transport. May additionally display a raft-association independent effect on budding. Plays a role in the determination of host range restriction on replication and virulence. Sialidase activity in late endosome/lysosome traffic seems to enhance virus replication. The protein is Neuraminidase of Influenza A virus (strain A/Chicken/Hong Kong/96.1/2002 H5N1 genotype Y).